We begin with the raw amino-acid sequence, 387 residues long: ATP phosphoribosyltransferase regulatory subunit (387 aa).

Belongs to the class-II aminoacyl-tRNA synthetase family. HisZ subfamily. Heteromultimer composed of HisG and HisZ subunits.

The protein localises to the cytoplasm. It functions in the pathway amino-acid biosynthesis; L-histidine biosynthesis; L-histidine from 5-phospho-alpha-D-ribose 1-diphosphate: step 1/9. Its function is as follows. Required for the first step of histidine biosynthesis. May allow the feedback regulation of ATP phosphoribosyltransferase activity by histidine. This Psychrobacter arcticus (strain DSM 17307 / VKM B-2377 / 273-4) protein is ATP phosphoribosyltransferase regulatory subunit.